The sequence spans 89 residues: Small ribosomal subunit protein uS15 (89 aa).

This sequence belongs to the universal ribosomal protein uS15 family. As to quaternary structure, part of the 30S ribosomal subunit. Forms a bridge to the 50S subunit in the 70S ribosome, contacting the 23S rRNA.

Functionally, one of the primary rRNA binding proteins, it binds directly to 16S rRNA where it helps nucleate assembly of the platform of the 30S subunit by binding and bridging several RNA helices of the 16S rRNA. Its function is as follows. Forms an intersubunit bridge (bridge B4) with the 23S rRNA of the 50S subunit in the ribosome. The polypeptide is Small ribosomal subunit protein uS15 (Chlorobium limicola (strain DSM 245 / NBRC 103803 / 6330)).